A 139-amino-acid chain; its full sequence is Protein Turandot B (139 aa).

Residues 1–21 (MNFNMSMICFALLLIVTLCSA) form the signal peptide.

This sequence belongs to the Turandot family.

The protein localises to the secreted. A humoral factor that may play a role in stress tolerance. This Drosophila yakuba (Fruit fly) protein is Protein Turandot B.